Reading from the N-terminus, the 1198-residue chain is Fibronectin type-III domain-containing protein 3A (1198 aa).

The interval 160–221 is disordered; that stretch reads YGDVDAHSTH…PSPINEHNGL (62 aa). The segment covering 163 to 201 has biased composition (basic and acidic residues); sequence VDAHSTHGRSNFRDERSSKTYERLQKKLKDRQGTQKDKM. A compositionally biased stretch (low complexity) spans 202-214; the sequence is SSPPSSPQKCPSP. A phosphoserine mark is found at Ser-203, Ser-207, and Ser-213. Fibronectin type-III domains follow at residues 268–369, 373–465, 469–562, 566–660, 664–757, 761–851, 861–950, 951–1045, and 1046–1151; these read NIVK…TLSC, IPNP…TSGC, MPAS…TCPD, IPVK…TPAV, PCLP…TAPG, QCKP…TPPS, EISD…TKPL, PPDP…TPKS, and VPAA…TEPP. Lys-384 is modified (N6-acetyllysine). The chain crosses the membrane as a helical span at residues 1177–1197; it reads ILVLFAFFSILIAFIIQYFVI.

It belongs to the FNDC3 family. Expressed in the odontoblast and nerves in the dental pulp. Also expressed in trachea and to a lesser extent in the brain, liver, lung and kidney.

It is found in the golgi apparatus membrane. Functionally, mediates spermatid-Sertoli adhesion during spermatogenesis. The chain is Fibronectin type-III domain-containing protein 3A (FNDC3A) from Homo sapiens (Human).